A 336-amino-acid chain; its full sequence is Probable allantoicase 2 (336 aa).

It belongs to the allantoicase family.

It catalyses the reaction allantoate + H2O = (S)-ureidoglycolate + urea. It functions in the pathway nitrogen metabolism; (S)-allantoin degradation; (S)-ureidoglycolate from allantoate (aminidohydrolase route): step 1/1. The sequence is that of Probable allantoicase 2 from Burkholderia mallei (strain ATCC 23344).